The sequence spans 122 residues: uncharacterized protein (122 aa).

Residues M1–W35 form the signal peptide. The tract at residues Y55–P83 is disordered.

This is an uncharacterized protein from Oryza sativa subsp. japonica (Rice).